A 307-amino-acid chain; its full sequence is Ribonuclease Z (307 aa).

Histidine 63, histidine 65, aspartate 67, histidine 68, histidine 141, aspartate 212, and histidine 270 together coordinate Zn(2+). Aspartate 67 (proton acceptor) is an active-site residue.

It belongs to the RNase Z family. In terms of assembly, homodimer. Zn(2+) is required as a cofactor.

It carries out the reaction Endonucleolytic cleavage of RNA, removing extra 3' nucleotides from tRNA precursor, generating 3' termini of tRNAs. A 3'-hydroxy group is left at the tRNA terminus and a 5'-phosphoryl group is left at the trailer molecule.. Its function is as follows. Zinc phosphodiesterase, which displays some tRNA 3'-processing endonuclease activity. Probably involved in tRNA maturation, by removing a 3'-trailer from precursor tRNA. This chain is Ribonuclease Z, found in Bacillus anthracis (strain A0248).